A 222-amino-acid polypeptide reads, in one-letter code: N-acetyltransferase 8B (222 aa).

At 1 to 42 the chain is on the cytoplasmic side; that stretch reads MVSYHICEYQDSDYKSVVDVFTKGAEEYIPSTFRHLLLLPRT. The helical; Signal-anchor for type II membrane protein transmembrane segment at 43 to 67 threads the bilayer; sequence LLLLLGVSLALVLVSGSWLLAVVCI. Positions 62–217 constitute an N-acetyltransferase domain; sequence LAVVCIFFLL…VGIRFVQLNY (156 aa). Residues 68–222 are Lumenal-facing; the sequence is FFLLPFLWFL…VQLNYSFPSA (155 aa). Position 99 is an N6-acetyllysine (K99).

This sequence belongs to the NAT8 family. Post-translationally, acetylation on Lys-99 modulates enzymatic activity.

Its subcellular location is the endoplasmic reticulum-Golgi intermediate compartment membrane. It localises to the endoplasmic reticulum membrane. It catalyses the reaction L-lysyl-[protein] + acetyl-CoA = N(6)-acetyl-L-lysyl-[protein] + CoA + H(+). Functionally, endoplasmic reticulum (ER)-membrane-bound lysine N-acetyltransferase catalyzing the N6-acetylation of lysine residues in the lumen of the ER in various proteins, including PROM1 and BACE1, using acetyl-CoA as acetyl donor. Thereby, may regulate apoptosis through the acetylation and the regulation of the expression of PROM1. Acetylates and stabilizes BACE1 immature protein, leading to increased steady-state levels in neurons. By acting on BACE1 expression, may regulate amyloid beta-peptide formation. N(6)-lysine acetylation in ER maintains protein homeostasis and regulates reticulophagy. The sequence is that of N-acetyltransferase 8B from Rattus norvegicus (Rat).